Consider the following 299-residue polypeptide: N-acetylneuraminate lyase (299 aa).

Residues Ser-45 and Ser-46 each contribute to the aceneuramate site. Tyr-134 serves as the catalytic Proton donor. The Schiff-base intermediate with substrate role is filled by Lys-161. Residues Thr-163, Gly-185, Asp-187, and Glu-188 each contribute to the aceneuramate site.

Belongs to the DapA family. NanA subfamily. Homotetramer.

The protein resides in the cytoplasm. It carries out the reaction aceneuramate = aldehydo-N-acetyl-D-mannosamine + pyruvate. The protein operates within amino-sugar metabolism; N-acetylneuraminate degradation; D-fructose 6-phosphate from N-acetylneuraminate: step 1/5. Catalyzes the reversible aldol cleavage of N-acetylneuraminic acid (sialic acid; Neu5Ac) to form pyruvate and N-acetylmannosamine (ManNAc) via a Schiff base intermediate. The chain is N-acetylneuraminate lyase from Rhizobium meliloti (strain 1021) (Ensifer meliloti).